Reading from the N-terminus, the 62-residue chain is Photosystem II reaction center protein Z (62 aa).

A run of 2 helical transmembrane segments spans residues 8–28 (AVFA…VVFA) and 41–61 (FSGT…NSLI).

It belongs to the PsbZ family. In terms of assembly, PSII is composed of 1 copy each of membrane proteins PsbA, PsbB, PsbC, PsbD, PsbE, PsbF, PsbH, PsbI, PsbJ, PsbK, PsbL, PsbM, PsbT, PsbY, PsbZ, Psb30/Ycf12, at least 3 peripheral proteins of the oxygen-evolving complex and a large number of cofactors. It forms dimeric complexes.

It localises to the plastid. Its subcellular location is the chloroplast thylakoid membrane. May control the interaction of photosystem II (PSII) cores with the light-harvesting antenna, regulates electron flow through the 2 photosystem reaction centers. PSII is a light-driven water plastoquinone oxidoreductase, using light energy to abstract electrons from H(2)O, generating a proton gradient subsequently used for ATP formation. The chain is Photosystem II reaction center protein Z from Oenothera elata subsp. hookeri (Hooker's evening primrose).